A 285-amino-acid chain; its full sequence is Pantothenate synthetase (285 aa).

Position 30–37 (30–37 (MGFLHEGH)) interacts with ATP. His37 serves as the catalytic Proton donor. Residue Gln61 participates in (R)-pantoate binding. Gln61 contributes to the beta-alanine binding site. 148-151 (GKKD) lines the ATP pocket. Residue Gln154 participates in (R)-pantoate binding. Residues Val177 and 185-188 (LSSR) contribute to the ATP site.

It belongs to the pantothenate synthetase family. As to quaternary structure, homodimer.

It is found in the cytoplasm. The catalysed reaction is (R)-pantoate + beta-alanine + ATP = (R)-pantothenate + AMP + diphosphate + H(+). It participates in cofactor biosynthesis; (R)-pantothenate biosynthesis; (R)-pantothenate from (R)-pantoate and beta-alanine: step 1/1. Catalyzes the condensation of pantoate with beta-alanine in an ATP-dependent reaction via a pantoyl-adenylate intermediate. This is Pantothenate synthetase from Leptospira interrogans serogroup Icterohaemorrhagiae serovar copenhageni (strain Fiocruz L1-130).